The primary structure comprises 204 residues: MVAEISPLLKFVLELGPLMVFFFANSRGEWLASTFPVLTEFGGPIFIATGLFMIATATALTVSWILTRKLPIMPLISGIVVFVFGALTLWLQNDTFIKMKPTIVNTLFGVILLGGLFFGQSLLGYVFNSAFKLTDEGWRKLTLRWGVFFLFLAVLNEVVWRMFTTDTWVAFKVWGTMPITIIFTMAQMPFVMRHSVEPLGKDEK.

The next 6 helical transmembrane spans lie at 3 to 23 (AEIS…VFFF), 45 to 65 (IFIA…VSWI), 70 to 90 (LPIM…LTLW), 107 to 127 (LFGV…GYVF), 145 to 165 (WGVF…MFTT), and 168 to 188 (WVAF…MAQM).

This sequence belongs to the YciB family.

Its subcellular location is the cell inner membrane. In terms of biological role, plays a role in cell envelope biogenesis, maintenance of cell envelope integrity and membrane homeostasis. This Agrobacterium fabrum (strain C58 / ATCC 33970) (Agrobacterium tumefaciens (strain C58)) protein is Inner membrane-spanning protein YciB.